The sequence spans 410 residues: NADH-quinone oxidoreductase subunit D (410 aa).

Belongs to the complex I 49 kDa subunit family. In terms of assembly, NDH-1 is composed of 14 different subunits. Subunits NuoB, C, D, E, F, and G constitute the peripheral sector of the complex.

Its subcellular location is the cell inner membrane. It catalyses the reaction a quinone + NADH + 5 H(+)(in) = a quinol + NAD(+) + 4 H(+)(out). Functionally, NDH-1 shuttles electrons from NADH, via FMN and iron-sulfur (Fe-S) centers, to quinones in the respiratory chain. The immediate electron acceptor for the enzyme in this species is believed to be ubiquinone. Couples the redox reaction to proton translocation (for every two electrons transferred, four hydrogen ions are translocated across the cytoplasmic membrane), and thus conserves the redox energy in a proton gradient. The polypeptide is NADH-quinone oxidoreductase subunit D (Nitratiruptor sp. (strain SB155-2)).